The chain runs to 927 residues: MLEKTYDAKTVEPKIAKVWEEADAFRAGAGAEEGAEAFTIVIPPPNVTGSLHMGHALNNTLQDILVRFERMRGKNVLWQPGMDHAGIATQMVVERQLMEKQIHRRDLTREQFIEKVWEWKAESGGTIFNQLKRLGASADWSRERFTMDEGLSKAVLEVFVTLYKEGLIYKDKRLVNWDPRLLTAISDLEVEQHEVNGNLWHFRYPLEGETFDPENPKTFITVATTRPETMLGDTAVAVHPDDERYRHLVGKNVVLPIVGRKIPVVADEYSDPEKGSGAVKITPAHDFNDFEVGKRHKLPAINILTVEAAIKLKDNEDFLAGLDATPERQAVWDELDGLDRFVARKKIVELMEEGGFLEKVEPHRHAVPHGDRGGVPIEPFLTEQWYANAAELAKPAIASVREGRTNFVPKNWEKTYFDWMENIQPWCISRQLWWGHQIPAWYGPDGRVFVEKTEEEALSAAIEYYLALEGPWKAWVEDRLENFQPGEILTRDEDVLDTWFSSALWPFSTLGWPDQTPELKTYYQTDVLVTGFDIIFFWVARMMMMGLHFMDEEPFHTVYVHALVRDKNGAKMSKSKGNVIDPLDLIDEYGADALRFTLTVMAAQGRDVKLDPARIAGYRNFGTKLWNATRFAEMNEVARNDDFWLNDAKLAVNRWILTELTRAARQITDGITSYRFNEAAGAAYRFVWNLFCDWYLELLKPVFMGTDEAAKAESRACVAFVLDEIYKLLHPMMPFMTEELWAQTAGEGKERESLLCHAAWPSPDFEDDEAAADINWLVDLVSGIRSVRSEMNVPPAAIAPLVVVGANGVTRERLVRQDSAIKRLARVGDISLADAAPKGSAQIVLNEATICLPLGSLIDLAAEAARLQKELAKVTEEIARLHKKLSNERFVASAPAEIVEAEREKLAEYRDAQDKLAVALTRVRDAG.

A 'HIGH' region motif is present at residues 45-55; that stretch reads PNVTGSLHMGH. The 'KMSKS' region motif lies at 571–575; the sequence is KMSKS. Position 574 (lysine 574) interacts with ATP. A coiled-coil region spans residues 856–917; sequence SLIDLAAEAA…EYRDAQDKLA (62 aa).

The protein belongs to the class-I aminoacyl-tRNA synthetase family. ValS type 1 subfamily. In terms of assembly, monomer.

It localises to the cytoplasm. The catalysed reaction is tRNA(Val) + L-valine + ATP = L-valyl-tRNA(Val) + AMP + diphosphate. Functionally, catalyzes the attachment of valine to tRNA(Val). As ValRS can inadvertently accommodate and process structurally similar amino acids such as threonine, to avoid such errors, it has a 'posttransfer' editing activity that hydrolyzes mischarged Thr-tRNA(Val) in a tRNA-dependent manner. This is Valine--tRNA ligase from Mesorhizobium japonicum (strain LMG 29417 / CECT 9101 / MAFF 303099) (Mesorhizobium loti (strain MAFF 303099)).